The following is a 116-amino-acid chain: U11-theraphotoxin-Hhn1b (116 aa).

The first 21 residues, 1-21, serve as a signal peptide directing secretion; that stretch reads MNTVRVAFLLVFVLAVSLGQA. Positions 22–74 are excised as a propeptide; it reads DKDENRMEMQEKTEQGKSYLDFAENLLLQKLEELEAKLLEEDSEESRNSRQKR. The interval 61–83 is disordered; the sequence is EEDSEESRNSRQKRCIGEGVPCD. Disulfide bonds link cysteine 75–cysteine 90, cysteine 82–cysteine 95, and cysteine 89–cysteine 110.

This sequence belongs to the neurotoxin 14 (magi-1) family. 01 (HNTX-16) subfamily. As to expression, expressed by the venom gland.

Its subcellular location is the secreted. Probable ion channel inhibitor. This Cyriopagopus hainanus (Chinese bird spider) protein is U11-theraphotoxin-Hhn1b.